The following is a 187-amino-acid chain: CASP-like protein 2C1 (187 aa).

Over 1–14 (MVAAARVVSGVKAE) the chain is Cytoplasmic. A helical transmembrane segment spans residues 15-35 (GLLRGACAALAAAAALLLGLS). Topologically, residues 36 to 54 (TQTETVLLVRKKGTVKDVQ) are extracellular. Residues 55–75 (ALWVLAMAAASAAGYHLLQLL) traverse the membrane as a helical segment. The Cytoplasmic segment spans residues 76–97 (KCLYLGRGGGRALAWTCLLLDK). The helical transmembrane segment at 98 to 118 (ACAYATFATTVAAAQACVVAL) threads the bilayer. Over 119 to 139 (DGAHALQWTKLCNIYTRFCEQ) the chain is Extracellular. A helical transmembrane segment spans residues 140-160 (VAGSLVLGMLAAVGTAVLSAA). At 161–187 (SARNVFRHYYCSSHSPPAPPPETCDAH) the chain is on the cytoplasmic side.

The protein belongs to the Casparian strip membrane proteins (CASP) family. Homodimer and heterodimers.

It localises to the cell membrane. This is CASP-like protein 2C1 from Zea mays (Maize).